The primary structure comprises 61 residues: Small ribosomal subunit protein uS14B (61 aa).

The Zn(2+) site is built by Cys-24, Cys-27, Cys-40, and Cys-43.

It belongs to the universal ribosomal protein uS14 family. Zinc-binding uS14 subfamily. Part of the 30S ribosomal subunit. Contacts proteins S3 and S10. Zn(2+) is required as a cofactor.

Its function is as follows. Binds 16S rRNA, required for the assembly of 30S particles and may also be responsible for determining the conformation of the 16S rRNA at the A site. The chain is Small ribosomal subunit protein uS14B from Mycobacterium bovis (strain ATCC BAA-935 / AF2122/97).